The chain runs to 299 residues: F-actin-capping protein subunit alpha-3 (299 aa).

2 positions are modified to phosphoserine: Ser-2 and Ser-290.

The protein belongs to the F-actin-capping protein alpha subunit family. Component of the F-actin capping complex, composed of a heterodimer of an alpha and a beta subunit. Component of the WASH complex, composed of F-actin-capping protein subunit alpha (CAPZA1, CAPZA2 or CAPZA3), F-actin-capping protein subunit beta (CAPZB), WASHC1, WASHC2, WASHC3, WASHC4 and WASHC5. As to expression, exclusively expressed in the testis.

Its subcellular location is the cytoplasm. It localises to the cytoskeleton. F-actin-capping proteins bind in a Ca(2+)-independent manner to the fast growing ends of actin filaments (barbed end) thereby blocking the exchange of subunits at these ends. Unlike other capping proteins (such as gelsolin and severin), these proteins do not sever actin filaments. May play a role in the morphogenesis of spermatid. This is F-actin-capping protein subunit alpha-3 (Capza3) from Mus musculus (Mouse).